The sequence spans 426 residues: Protein FAM181B (426 aa).

Disordered regions lie at residues 106-157 (GLMG…AAAA) and 226-246 (NLPP…CGPS). Residues 128 to 141 (PLAAPSAPTVAAPA) show a composition bias toward low complexity.

It belongs to the FAM181 family.

The chain is Protein FAM181B (FAM181B) from Homo sapiens (Human).